Consider the following 337-residue polypeptide: CMRF35-like molecule 1 (337 aa).

Positions 1-19 are cleaved as a signal peptide; that stretch reads MHLSLLVPFLFWITGCCTA. Residues 20-125 form the Ig-like V-type domain; it reads EDPVTGPEEV…LDPMFKVTVN (106 aa). The Extracellular portion of the chain corresponds to 20 to 193; sequence EDPVTGPEEV…GVGDGFLDLS (174 aa). Positions 39–45 are plays an important role in murine norovirus (MNV) binding; the sequence is VQCRYTS. 2 disulfide bridges follow: C41/C109 and C55/C63. A helical transmembrane segment spans residues 194 to 214; the sequence is VLLPVISAVLLLLLLVASLFA. At 215–337 the chain is on the cytoplasmic side; it reads WRMVRRQKKA…IRRPLPAAMP (123 aa). Disordered regions lie at residues 248 to 270 and 318 to 337; these read QPRTSPGSSWKKGSSMSSSGKDH and LEEETTEYSSIRRPLPAAMP. Positions 252–266 are enriched in low complexity; sequence SPGSSWKKGSSMSSS.

Belongs to the CD300 family. In terms of assembly, interacts with PTPN6/SHP-1 in a tyrosine phosphorylation dependent manner. Interacts with IL4R. Phosphorylated on tyrosine. As to expression, expressed in myeloid cells. Present on the surface of macrophages (at protein level). Highly expressed by alveolar, splenic macrophages and bone marrow-derived dendritic cells. Expression is increased following aeroallergen challenge in macrophages, mast cells, and eosinophils.

It localises to the cell membrane. Functionally, acts as an inhibitory receptor for myeloid cells and mast cells. Positively regulates the phagocytosis of apoptotic cells (efferocytosis) via phosphatidylserine (PS) recognition; recognizes and binds PS as a ligand which is expressed on the surface of apoptotic cells. Plays an important role in the maintenance of immune homeostasis, by promoting macrophage-mediated efferocytosis and by inhibiting dendritic cell-mediated efferocytosis. Negatively regulates Fc epsilon receptor-dependent mast cell activation and allergic responses via binding to ceramide which acts as a ligand. May act as a coreceptor for interleukin 4 (IL-4). Associates with and regulates IL-4 receptor alpha-mediated responses by augmenting IL-4- and IL-13-induced signaling. Negatively regulates the Toll-like receptor (TLR) signaling mediated by MYD88 and TRIF through activation of PTPN6/SHP-1 and PTPN11/SHP-2. Inhibits osteoclast formation. Induces macrophage cell death upon engagement. In terms of biological role, (Microbial infection) Acts as a functional receptor for murine norovirus (MNV). Mediates binding to the cell surface and is both necessary and sufficient for viral entry and replication. This interaction requires Mg(2+) and Ca(2+) and is enhanced by bile acids. Primary determinant of MNV species tropism and is sufficient to render cells permissive to infection by MNV. Can render nonmurine mammalian cells susceptible to MNV infection. The polypeptide is CMRF35-like molecule 1 (Cd300lf) (Mus musculus (Mouse)).